The primary structure comprises 584 residues: Ras-specific guanine nucleotide-releasing factor RalGPS1 (584 aa).

Residues 1–13 (MDLMNGQSSSVNI) show a composition bias toward polar residues. Disordered stretches follow at residues 1–29 (MDLM…SLSD), 285–338 (IEPG…IPHG), and 380–407 (HVPS…SELS). A compositionally biased stretch (low complexity) spans 14–26 (AATASEKSSSSES). Positions 50–288 (TPEEYAGQIT…YKLSLKIEPG (239 aa)) constitute a Ras-GEF domain. The PXXP signature appears at 326–329 (PTPP). Positions 388–404 (ESSTLSSGISIGSSDGS) are enriched in low complexity. A PH domain is found at 458–570 (AVTIQGVLRR…WFKHLSAACQ (113 aa)).

It is found in the cytoplasm. Its subcellular location is the cell membrane. Its function is as follows. Guanine nucleotide exchange factor. May be involved in cytoskeletal organization. This is Ras-specific guanine nucleotide-releasing factor RalGPS1 (RALGPS1) from Gallus gallus (Chicken).